The following is a 22-amino-acid chain: Mu-conotoxin TIIIA (22 aa).

Intrachain disulfides connect Cys-4–Cys-16, Cys-5–Cys-21, and Cys-11–Cys-22. A 4-hydroxyproline mark is found at Pro-8 and Pro-18. Position 22 is a cysteine amide (Cys-22).

It belongs to the conotoxin M superfamily. In terms of tissue distribution, expressed by the venom duct.

It localises to the secreted. In terms of biological role, mu-conotoxins block voltage-gated sodium channels (Nav). This synthetic toxin reversibly and potently blocks rNav1.4/SCN4A (IC(50) is 9 nM) and rNav1.2/SCN2A (IC(50) is 40 nM). It also moderately blocks rNav1.1/SCN1A, rNav1.3/SCN3A, and rNav1.6/SCN8A. The block of SCN1A and SCN2A is modified when beta-subunits are coexpressed with alpha subunits. Hence, blocks of channels containing beta-1 and beta-3 subunits are more potent (compared to channels without beta subunits), whereas blocks of channels containing beta-2 and beta-4 subunits are less potent (compared to channels without beta subunits). The chain is Mu-conotoxin TIIIA from Conus tulipa (Fish-hunting cone snail).